A 156-amino-acid polypeptide reads, in one-letter code: ATP synthase subunit b', chloroplastic (156 aa).

The helical transmembrane segment at 20-42 threads the bilayer; the sequence is NGTLPLMALQFLTLMVLLNTIFY.

It belongs to the ATPase B chain family. As to quaternary structure, F-type ATPases have 2 components, F(1) - the catalytic core - and F(0) - the membrane proton channel. F(1) has five subunits: alpha(3), beta(3), gamma(1), delta(1), epsilon(1). F(0) has four main subunits: a(1), b(1), b'(1) and c(10-14). The alpha and beta chains form an alternating ring which encloses part of the gamma chain. F(1) is attached to F(0) by a central stalk formed by the gamma and epsilon chains, while a peripheral stalk is formed by the delta, b and b' chains.

Its subcellular location is the plastid. It is found in the chloroplast thylakoid membrane. F(1)F(0) ATP synthase produces ATP from ADP in the presence of a proton or sodium gradient. F-type ATPases consist of two structural domains, F(1) containing the extramembraneous catalytic core and F(0) containing the membrane proton channel, linked together by a central stalk and a peripheral stalk. During catalysis, ATP synthesis in the catalytic domain of F(1) is coupled via a rotary mechanism of the central stalk subunits to proton translocation. Its function is as follows. Component of the F(0) channel, it forms part of the peripheral stalk, linking F(1) to F(0). The b'-subunit is a diverged and duplicated form of b found in plants and photosynthetic bacteria. The chain is ATP synthase subunit b', chloroplastic from Pyropia yezoensis (Susabi-nori).